Consider the following 460-residue polypeptide: Elongation factor 1-alpha (460 aa).

Position 2 is a n,N,N-trimethylglycine (Gly-2). Lys-3 carries the N6,N6-dimethyllysine; alternate modification. Lys-3 is subject to N6-methyllysine; alternate. Positions Lys-6–Thr-241 constitute a tr-type G domain. The G1 stretch occupies residues Gly-15–Ser-22. Gly-15–Ser-22 contributes to the GTP binding site. The residue at position 31 (Lys-31) is an N6-methyllysine. The segment at Gly-71 to Asp-75 is G2. Lys-80 carries the post-translational modification N6,N6,N6-trimethyllysine. Residues Asp-92–Gly-95 are G3. GTP is bound by residues Asp-92 to His-96 and Asn-154 to Asp-157. Residues Asn-154 to Asp-157 form a G4 region. Residues Ser-193–Phe-195 are G5. Residue Lys-317 is modified to N6,N6-dimethyllysine; alternate. At Lys-317 the chain carries N6-methyllysine; alternate. Position 391 is an N6-methyllysine (Lys-391).

The protein belongs to the TRAFAC class translation factor GTPase superfamily. Classic translation factor GTPase family. EF-Tu/EF-1A subfamily.

The protein resides in the cytoplasm. Its function is as follows. This protein promotes the GTP-dependent binding of aminoacyl-tRNA to the A-site of ribosomes during protein biosynthesis. In Sordaria macrospora, this protein is Elongation factor 1-alpha (TEF).